The following is a 472-amino-acid chain: Methylenetetrahydrofolate--tRNA-(uracil-5-)-methyltransferase TrmFO (472 aa).

15 to 20 (GGGLAG) is an FAD binding site.

It belongs to the MnmG family. TrmFO subfamily. Requires FAD as cofactor.

The protein resides in the cytoplasm. The catalysed reaction is uridine(54) in tRNA + (6R)-5,10-methylene-5,6,7,8-tetrahydrofolate + NADH + H(+) = 5-methyluridine(54) in tRNA + (6S)-5,6,7,8-tetrahydrofolate + NAD(+). The enzyme catalyses uridine(54) in tRNA + (6R)-5,10-methylene-5,6,7,8-tetrahydrofolate + NADPH + H(+) = 5-methyluridine(54) in tRNA + (6S)-5,6,7,8-tetrahydrofolate + NADP(+). Catalyzes the folate-dependent formation of 5-methyl-uridine at position 54 (M-5-U54) in all tRNAs. This chain is Methylenetetrahydrofolate--tRNA-(uracil-5-)-methyltransferase TrmFO, found in Rhizobium meliloti (strain 1021) (Ensifer meliloti).